The primary structure comprises 335 residues: E3 ubiquitin ligase rnf-121 (335 aa).

At 1–47 the chain is on the cytoplasmic side; that stretch reads MGQHGAIRLQNEVQEGMPPPHELTEEEQWAEEHRKMHEKHKGHEAMH. A helical membrane pass occupies residues 48–68; that stretch reads MEMMVIFMISVIVGQIFLVTW. Over 69-72 the chain is Lumenal; the sequence is KRKH. The chain crosses the membrane as a helical span at residues 73-93; it reads FKSYQMCTLIGMLTIPVYVCF. The Cytoplasmic portion of the chain corresponds to 94–99; the sequence is NRSWYR. A helical membrane pass occupies residues 100–120; sequence FLATWLVFCIFSAFIWLKASA. The Lumenal portion of the chain corresponds to 121-143; that stretch reads QHISGGTPRFVYKWFLFLHKLSY. A helical membrane pass occupies residues 144–164; sequence VLGVVGYLIMMGALLGFHVLF. The Cytoplasmic segment spans residues 165-168; the sequence is GVSQ. Residues 169 to 189 traverse the membrane as a helical segment; it reads PTLMDAGILFMFYGVYYGVLG. Over 190-335 the chain is Lumenal; sequence RDFAHICTAR…QGLTTWMGLE (146 aa). The segment at 222–284 adopts an RING-type; atypical zinc-finger fold; that stretch reads CAVCGGRLDD…GKLQTCPYCK (63 aa).

It belongs to the RNF121 family. Expressed in body wall muscles, the hypodermis, seam cells, vulval cells, spermathecal cells, uterine cells and the distal tip cell (at protein level).

The protein resides in the endoplasmic reticulum membrane. It localises to the golgi apparatus membrane. It catalyses the reaction S-ubiquitinyl-[E2 ubiquitin-conjugating enzyme]-L-cysteine + [acceptor protein]-L-lysine = [E2 ubiquitin-conjugating enzyme]-L-cysteine + N(6)-ubiquitinyl-[acceptor protein]-L-lysine.. It functions in the pathway protein modification; protein ubiquitination. Functionally, E3 ubiquitin ligase which accepts ubiquitin and transfers it to substrates such as the beta-integrin subunit pat-3, promoting their degradation by the endoplasmic reticulum-associated degradation (ERAD) pathway which is a pathway involved in ubiquitin-dependent degradation of misfolded endoplasmic reticulum proteins. Negatively regulates the unfolded protein response to reduce endoplasmic reticulum stress. Required for the cessation of distal tip cell migration at the end of larval morphogenesis. Plays a role in germline and gonad development. This chain is E3 ubiquitin ligase rnf-121, found in Caenorhabditis elegans.